The sequence spans 240 residues: Lipoprotein-releasing system ATP-binding protein LolD (240 aa).

One can recognise an ABC transporter domain in the interval 15–240 (IRAESLGKTY…GLRELTSAEV (226 aa)). 51–58 (GASGAGKS) provides a ligand contact to ATP.

This sequence belongs to the ABC transporter superfamily. Lipoprotein translocase (TC 3.A.1.125) family. The complex is composed of two ATP-binding proteins (LolD) and two transmembrane proteins (LolC and LolE).

The protein localises to the cell inner membrane. Part of the ABC transporter complex LolCDE involved in the translocation of mature outer membrane-directed lipoproteins, from the inner membrane to the periplasmic chaperone, LolA. Responsible for the formation of the LolA-lipoprotein complex in an ATP-dependent manner. This Xylella fastidiosa (strain Temecula1 / ATCC 700964) protein is Lipoprotein-releasing system ATP-binding protein LolD.